The chain runs to 183 residues: COMM domain-containing protein 8 (183 aa).

Positions 116–183 constitute a COMM domain; sequence QLQDFDWQVK…AANKVVLQLK (68 aa).

Belongs to the COMM domain-containing protein 8 family. In terms of assembly, component of the commander complex consisting of the CCC subcomplex and the retriever subcomplex. Component of the CCC (COMMD/CCDC22/CCDC93) subcomplex consisting of COMMD1, COMMD2, COMMD3, COMMD4, COMMD5, COMMD6, COMMD7, COMMD8, COMMD9, COMMD10, CCDC22 and CCDC93; within the complex forms a heterodimer with COMMD4. Interacts with RELA, RELB, NFKB1/p105. Interacts with CCDC22, CCDC93, SCNN1B, CUL1, CUL2, CUL3, CUL4A, CUL4B, CUL5. As to expression, widely expressed with highest expression in thyroid.

It localises to the cytoplasm. It is found in the nucleus. In terms of biological role, scaffold protein in the commander complex that is essential for endosomal recycling of transmembrane cargos; the commander complex is composed of the CCC subcomplex and the retriever subcomplex. May modulate activity of cullin-RING E3 ubiquitin ligase (CRL) complexes. May down-regulate activation of NF-kappa-B. The polypeptide is COMM domain-containing protein 8 (COMMD8) (Homo sapiens (Human)).